The sequence spans 61 residues: UPF0434 protein Bpet2671 (61 aa).

This sequence belongs to the UPF0434 family.

The polypeptide is UPF0434 protein Bpet2671 (Bordetella petrii (strain ATCC BAA-461 / DSM 12804 / CCUG 43448)).